Here is a 482-residue protein sequence, read N- to C-terminus: Probable cytosol aminopeptidase (482 aa).

Residues Lys-251 and Asp-256 each coordinate Mn(2+). Lys-263 is an active-site residue. The Mn(2+) site is built by Asp-274, Asp-333, and Glu-335. Arg-337 is a catalytic residue.

The protein belongs to the peptidase M17 family. Requires Mn(2+) as cofactor.

The protein localises to the cytoplasm. The catalysed reaction is Release of an N-terminal amino acid, Xaa-|-Yaa-, in which Xaa is preferably Leu, but may be other amino acids including Pro although not Arg or Lys, and Yaa may be Pro. Amino acid amides and methyl esters are also readily hydrolyzed, but rates on arylamides are exceedingly low.. It carries out the reaction Release of an N-terminal amino acid, preferentially leucine, but not glutamic or aspartic acids.. Functionally, presumably involved in the processing and regular turnover of intracellular proteins. Catalyzes the removal of unsubstituted N-terminal amino acids from various peptides. In Acinetobacter baumannii (strain SDF), this protein is Probable cytosol aminopeptidase.